A 630-amino-acid polypeptide reads, in one-letter code: E3 ubiquitin-protein ligase TRIM41 (630 aa).

The RING-type; degenerate zinc finger occupies 20-61 (CAICLDYFTDPVSIGCGHNFCRVCVTQLWGGEDEEDRDELDR). Positions 51 to 75 (EDEEDRDELDREEEEEEVGEEEEVE) are enriched in acidic residues. 2 disordered regions span residues 51–97 (EDEE…GDME) and 148–176 (EDED…PPPA). Thr85 carries the phosphothreonine modification. The span at 148-166 (EDEDEEEEVLEEDEEEELD) shows a compositional bias: acidic residues. The segment at 222 to 263 (NEQGICPRHQEALKLFCEVDEEAICVVCRESRSHKQHSVVPL) adopts a B box-type zinc-finger fold. 4 residues coordinate Zn(2+): Cys227, His230, Cys249, and His255. A Glycyl lysine isopeptide (Lys-Gly) (interchain with G-Cter in SUMO2) cross-link involves residue Lys256. Residues 281–374 (LRKHLEAVQK…AEAQERSQQG (94 aa)) are a coiled coil. A B30.2/SPRY domain is found at 413-630 (LTDAIVRKMS…SKGTRIKLCP (218 aa)). Ser447 carries the post-translational modification Phosphoserine. The segment at 503–535 (ARESTHHKEKVGSGGSSVSSGDASSSRHHHRRR) is disordered.

It belongs to the TRIM/RBCC family. As to quaternary structure, interacts with PRKCA. Interacts with NOD2. Interacts with TRIM17; this interaction prevents TRIM41 activity on ZSCAN2. Post-translationally, auto-ubiquitinated.

The protein resides in the cytoplasm. It localises to the nucleus. The enzyme catalyses S-ubiquitinyl-[E2 ubiquitin-conjugating enzyme]-L-cysteine + [acceptor protein]-L-lysine = [E2 ubiquitin-conjugating enzyme]-L-cysteine + N(6)-ubiquitinyl-[acceptor protein]-L-lysine.. The protein operates within protein modification; protein ubiquitination. In terms of biological role, E3 ligase that plays essential roles in innate antiviral response. Directly binds to influenza A virus or vesicular stomatitis virus nucleoproteins and targets them for ubiquitination and proteasomal degradation, thereby limiting viral infections. Activates the innate antiviral response by catalyzing monoubiquitination of CGAS, thereby activating CGAS. Also involved in innate antiviral response by mediating 'Lys-63'-linked polyubiquitylation of BCL10 which in turn hubs NEMO for activation of NF-kappa-B and IRF3 pathways. Catalyzes the ubiquitin-mediated degradation of other substrates including protein kinase C, ZSCAN21 or TOP3B suggesting additional roles besides its function in immune response. This Mus musculus (Mouse) protein is E3 ubiquitin-protein ligase TRIM41.